The chain runs to 105 residues: Keratin-associated protein 17-1 (105 aa).

Interacts with hair keratins.

In terms of biological role, in the hair cortex, hair keratin intermediate filaments are embedded in an interfilamentous matrix, consisting of hair keratin-associated proteins (KRTAP), which are essential for the formation of a rigid and resistant hair shaft through their extensive disulfide bond cross-linking with abundant cysteine residues of hair keratins. The matrix proteins include the high-sulfur and high-glycine-tyrosine keratins. The protein is Keratin-associated protein 17-1 (KRTAP17-1) of Homo sapiens (Human).